A 460-amino-acid chain; its full sequence is 25S rRNA (cytosine-C(5))-methyltransferase rcm1 (460 aa).

Residues 223–229 (CAAPGNK), Glu-246, Asp-273, and Asp-293 each bind S-adenosyl-L-methionine. Residue Cys-350 is the Nucleophile of the active site. Basic and acidic residues predominate over residues 430 to 439 (KMYKNDDDTK). A disordered region spans residues 430–460 (KMYKNDDDTKKRKRKKKKKEVKKKARIQGEE). A compositionally biased stretch (basic residues) spans 440-460 (KRKRKKKKKEVKKKARIQGEE).

Belongs to the class I-like SAM-binding methyltransferase superfamily. RsmB/NOP family. In terms of assembly, interacts with trm112.

The protein resides in the nucleus. It localises to the nucleolus. It catalyses the reaction a cytidine in 25S rRNA + S-adenosyl-L-methionine = a 5-methylcytidine in 25S rRNA + S-adenosyl-L-homocysteine + H(+). In terms of biological role, S-adenosyl-L-methionine-dependent methyltransferase that specifically methylates the C(5) position of a cytosine in 25S rRNA. This chain is 25S rRNA (cytosine-C(5))-methyltransferase rcm1 (rcm1), found in Schizosaccharomyces pombe (strain 972 / ATCC 24843) (Fission yeast).